A 133-amino-acid polypeptide reads, in one-letter code: UPF0102 protein Anae109_1947 (133 aa).

Belongs to the UPF0102 family.

The protein is UPF0102 protein Anae109_1947 of Anaeromyxobacter sp. (strain Fw109-5).